The primary structure comprises 289 residues: 4-hydroxy-tetrahydrodipicolinate synthase (289 aa).

Pyruvate is bound at residue Thr-46. The active-site Proton donor/acceptor is the Tyr-134. The Schiff-base intermediate with substrate role is filled by Lys-162. Val-204 contacts pyruvate.

Belongs to the DapA family. As to quaternary structure, homotetramer; dimer of dimers.

The protein resides in the cytoplasm. The catalysed reaction is L-aspartate 4-semialdehyde + pyruvate = (2S,4S)-4-hydroxy-2,3,4,5-tetrahydrodipicolinate + H2O + H(+). It participates in amino-acid biosynthesis; L-lysine biosynthesis via DAP pathway; (S)-tetrahydrodipicolinate from L-aspartate: step 3/4. In terms of biological role, catalyzes the condensation of (S)-aspartate-beta-semialdehyde [(S)-ASA] and pyruvate to 4-hydroxy-tetrahydrodipicolinate (HTPA). This Bacillus velezensis (strain DSM 23117 / BGSC 10A6 / LMG 26770 / FZB42) (Bacillus amyloliquefaciens subsp. plantarum) protein is 4-hydroxy-tetrahydrodipicolinate synthase.